The primary structure comprises 329 residues: uncharacterized protein (329 aa).

The next 7 membrane-spanning stretches (helical) occupy residues 29-49, 78-98, 120-140, 164-184, 217-237, 260-280, and 299-319; these read IVLW…AISH, VLVA…CWMG, KKWL…SLLV, WMIG…LIYL, YFFL…LLVI, FFWT…SFIV, and GSSL…LLFI.

It to M.pneumoniae MPN_129.

It is found in the cell membrane. This is an uncharacterized protein from Mycoplasma pneumoniae (strain ATCC 29342 / M129 / Subtype 1) (Mycoplasmoides pneumoniae).